A 769-amino-acid chain; its full sequence is Serine protease HtrA-like (769 aa).

Residues 1 to 20 (MDIGKKHVIPKSQYRRKRRE) are compositionally biased toward basic residues. The interval 1–388 (MDIGKKHVIP…KKATSKLNKG (388 aa)) is disordered. Basic and acidic residues-rich tracts occupy residues 21–64 (FFHN…ERFK), 71–87 (LEQRNRDVNENKAEESK), and 96–108 (YNKDHYLTDDVSK). Residues 126–139 (YEQNTEATLSTNST) show a composition bias toward polar residues. The span at 140–186 (DKVESTDMRKLSSDKNKVGHEEQHVLSKPSEHDKETRIDFESSRTDS) shows a compositional bias: basic and acidic residues. The segment covering 247–262 (QQSQNEQTKTYTYGDS) has biased composition (polar residues). 2 stretches are compositionally biased toward basic and acidic residues: residues 264–296 (QNDKSNHENDLSHHTPSISDDKDYVMREDHIVD) and 310–330 (KIDDDRKLDEKIHVEDKHKQN). A compositionally biased stretch (polar residues) spans 331 to 347 (ADSSETVGYQSQSSASH). Basic and acidic residues predominate over residues 348-364 (RSTEKRNMAINDHDKLN). The segment covering 366–388 (QKPNTKTSANNNQKKATSKLNKG) has biased composition (polar residues). A helical transmembrane segment spans residues 410 to 430 (LVILMGIIILIVILNAIFNNV). Catalysis depends on charge relay system residues H504, D534, and S619. Positions 680-733 (IASLNSFERQAVKLLGKVKNGVVVDQVDNNGLADQSGLKKGDVITELDGKLLED) constitute a PDZ domain.

It belongs to the peptidase S1C family.

It localises to the cell membrane. The polypeptide is Serine protease HtrA-like (Staphylococcus aureus (strain MRSA252)).